We begin with the raw amino-acid sequence, 308 residues long: Bacitracin transport ATP-binding protein BcrA (308 aa).

An ABC transporter domain is found at 8–236; sequence IETENLTKQY…NRKYTEFDVS (229 aa). 40-47 lines the ATP pocket; it reads GRNGAGKT.

This sequence belongs to the ABC transporter superfamily. In terms of assembly, the complex is probably composed of two ATP-binding proteins (BcrA) and two transmembrane proteins (BcrB).

Its function is as follows. Essential for high-level bacitracin resistance. Part of the ABC transporter complex BcrAB. Probably responsible for energy coupling to the transport system. This Enterococcus faecalis (Streptococcus faecalis) protein is Bacitracin transport ATP-binding protein BcrA.